A 557-amino-acid chain; its full sequence is TBCC domain-containing protein 1 (557 aa).

The C-CAP/cofactor C-like domain maps to 290–435; that stretch reads TTKRAKIACN…LEDHMARTGL (146 aa).

It belongs to the TBCC family.

It is found in the cytoplasm. The protein localises to the cytoskeleton. The protein resides in the microtubule organizing center. Its subcellular location is the centrosome. It localises to the spindle pole. Its function is as follows. Plays a role in the regulation of centrosome and Golgi apparatus positioning, with consequences on cell shape and cell migration. This is TBCC domain-containing protein 1 (TBCCD1) from Bos taurus (Bovine).